The chain runs to 313 residues: MLDNVLRIATRQSPLALWQAHYVKDKLMASHPGLVVELVPMVTRGDVILDTPLAKVGGKGLFVKELEVALLENRADIAVHSMKDVPVEFPQGLGLVTICKREDPRDAFVSNTYDSLDALPAGSIVGTSSLRRQCQLAERRPDLIIRSLRGNVGTRLSKLDNGEYDAIILAVAGLKRLGLESRIRAALPPEISLPAVGQGAVGIECRLDDARTRELLAALNHHETALRVTAERAMNTRLEGGCQVPIGSYAELIDGEIWLRALVGAPDGSQIIRGERRGAPQDAEQMGISLAEELLNNGAREILAEVYNGDAPA.

The residue at position 242 (cysteine 242) is an S-(dipyrrolylmethanemethyl)cysteine.

This sequence belongs to the HMBS family. Monomer. Dipyrromethane is required as a cofactor.

It carries out the reaction 4 porphobilinogen + H2O = hydroxymethylbilane + 4 NH4(+). The protein operates within porphyrin-containing compound metabolism; protoporphyrin-IX biosynthesis; coproporphyrinogen-III from 5-aminolevulinate: step 2/4. Its function is as follows. Tetrapolymerization of the monopyrrole PBG into the hydroxymethylbilane pre-uroporphyrinogen in several discrete steps. The chain is Porphobilinogen deaminase from Escherichia coli O45:K1 (strain S88 / ExPEC).